Reading from the N-terminus, the 151-residue chain is Proline-rich acidic protein 1 (151 aa).

The first 20 residues, 1 to 20 (MRRLLLVTSLVVVLLWEAGA), serve as a signal peptide directing secretion. Residues 71 to 151 (LTTEEKPRGQ…EDQDHIYHPQ (81 aa)) form a disordered region.

In terms of assembly, interacts with isoform 1 and isoform 3 of MAD1L1. Interacts with MTTP. In terms of tissue distribution, highly expressed in the intestinal epithelial cells (at protein level). Abundantly expressed in the epithelial cells of the liver, kidney and cervix. Significantly down-regulated in hepatocellular carcinoma and right colon adenocarcinoma compared with the respective adjacent normal tissues. Expressed in epididymis (at protein level).

It localises to the secreted. The protein resides in the endoplasmic reticulum. Lipid-binding protein which promotes lipid absorption by facilitating MTTP-mediated lipid transfer (mainly triglycerides and phospholipids) and MTTP-mediated apoB lipoprotein assembly and secretion. Protects the gastrointestinal epithelium from irradiation-induced apoptosis. May play an important role in maintaining normal growth homeostasis in epithelial cells. Involved in p53/TP53-dependent cell survival after DNA damage. May down-regulate the expression of MAD1L1 and exert a suppressive role in mitotic spindle assembly checkpoint in hepatocellular carcinomas. The chain is Proline-rich acidic protein 1 (PRAP1) from Homo sapiens (Human).